Reading from the N-terminus, the 205-residue chain is Spermatogenesis-associated protein 24 (205 aa).

The stretch at 17-166 forms a coiled coil; that stretch reads LAFDQLRDVI…QQKQIFRNHM (150 aa). The segment at 138 to 185 is required for interaction with CBX5 and TBPL1; it reads EDILNGKENEIKELQQVISQQKQIFRNHMSDFRIQKQQESYMAQVLDQ. A disordered region spans residues 180–205; sequence AQVLDQKHKKASGTRQAHSHQHPREK. Positions 186–205 are enriched in basic residues; it reads KHKKASGTRQAHSHQHPREK.

The protein belongs to the SPATA24 family. Homodimer. Interacts with CBX3, CBX5, GMNN, GTF2B, TBPL1 and the polycomb proteins PHCF2, RNF2 and SCMH1 but not with CBX1 or PCGF2.

The protein localises to the cytoplasm. It localises to the nucleus. Its subcellular location is the nucleolus. The protein resides in the nucleoplasm. Binds DNA with high affinity but does not bind to TATA boxes. Synergises with GMNN and TBP in activation of TATA box-containing promoters and with GMNN and TBPL1 in activation of the NF1 TATA-less promoter. May play a role in cytoplasm movement and removal during spermiogenesis. This chain is Spermatogenesis-associated protein 24 (SPATA24), found in Macaca fascicularis (Crab-eating macaque).